The primary structure comprises 499 residues: Alpha-internexin (499 aa).

The segment at 1–87 (MSFGSEHYLC…SQAAARTNEY (87 aa)) is head. Phosphoserine is present on Ser72. Positions 88 to 129 (KIIRTNEKEQLQGLNDRFAVFIEKVHQLETQNRALEAELAAL) are coil 1A. Positions 94–407 (EKEQLQGLND…KLLEGEETRF (314 aa)) constitute an IF rod domain. Residues 130 to 142 (RQRHAEPSRVGEL) form a linker 1 region. Positions 143–238 (FQRELRDLRA…QVHDEEVAEL (96 aa)) are coil 1B. Residue Ser219 is modified to Phosphoserine. The interval 239 to 262 (LATLQASSQAAAEVDVTVAKPDLT) is linker 2. The segment at 263–408 (SALREIRAQY…LLEGEETRFS (146 aa)) is coil 2. Lys290 carries the post-translational modification N6-acetyllysine. Ser335 is subject to Phosphoserine. Residues 409–499 (TSGLSISGLN…EETTISSQKI (91 aa)) form a tail region. The segment at 441–466 (STGLSLKKEEEEEEASKVASKKTSQI) is disordered. Phosphoserine occurs at positions 469 and 496.

This sequence belongs to the intermediate filament family. Forms homodimers (in vitro). Forms heterodimers with NEFL, NEFM or NEFH (in vitro). Post-translationally, O-glycosylated. In terms of tissue distribution, found predominantly in adult CNS.

In terms of biological role, class-IV neuronal intermediate filament that is able to self-assemble. It is involved in the morphogenesis of neurons. It may form an independent structural network without the involvement of other neurofilaments or it may cooperate with NEFL to form the filamentous backbone to which NEFM and NEFH attach to form the cross-bridges. May also cooperate with the neuronal intermediate filament protein PRPH to form filamentous networks. In Homo sapiens (Human), this protein is Alpha-internexin (INA).